A 220-amino-acid chain; its full sequence is LOB domain-containing protein 31 (220 aa).

The LOB domain occupies 10-112; the sequence is GPCGACKFLR…AELAYVQTQL (103 aa). The interval 117–172 is disordered; sequence GLPPPNSQNNSRTEAASSSNVPLISSVDSKDNMSSSSSHIPCMSQQQEQEQPKEAI. Positions 123 to 139 are enriched in polar residues; the sequence is SQNNSRTEAASSSNVPL.

This sequence belongs to the LOB domain-containing protein family. In terms of tissue distribution, expressed in roots, stems and flowers.

The chain is LOB domain-containing protein 31 (LBD31) from Arabidopsis thaliana (Mouse-ear cress).